Here is a 362-residue protein sequence, read N- to C-terminus: MNKTVVVAMSGGVDSSVVAYLLKKYTSYRVLGIFMKNWEEEDSNGLCSTAKDYEDVERVAEQLDIPYYTVSFAREYRERVFSRFLKEYSQGYTPNPDVLCNREIKFDLLQKKVVELGGDFLATGHYCRLDVKSQRVGLLRGKDPHKDQSYFLCGTHPESLKNVLFPLGDMTKREVRSIAAQAGLATAQKRDSTGICFIGKRPFKSFLEQFVPNVEGEIIDYDSQKIVGNHEGAHYYTIGQRRGLDIGGSEKPCYVVGKDMEKNIVYIVRGEDHPLLYQQELTAKELNWFVSPESITRCSAKVRYRSPDEECEILHTGTQDTVRVRFTSPVKAITPGQTIAFYDGERCLGGGIIEVAMTPHSV.

Residues 8 to 15 (AMSGGVDS) and methionine 35 each bind ATP. The tract at residues 95–97 (NPD) is interaction with target base in tRNA. The Nucleophile role is filled by cysteine 100. Cysteine 100 and cysteine 196 are disulfide-bonded. Position 124 (glycine 124) interacts with ATP. An interaction with tRNA region spans residues 146-148 (KDQ). Cysteine 196 serves as the catalytic Cysteine persulfide intermediate. Positions 303-304 (RY) are interaction with tRNA.

This sequence belongs to the MnmA/TRMU family.

It localises to the cytoplasm. The enzyme catalyses S-sulfanyl-L-cysteinyl-[protein] + uridine(34) in tRNA + AH2 + ATP = 2-thiouridine(34) in tRNA + L-cysteinyl-[protein] + A + AMP + diphosphate + H(+). In terms of biological role, catalyzes the 2-thiolation of uridine at the wobble position (U34) of tRNA, leading to the formation of s(2)U34. In Chlamydia abortus (strain DSM 27085 / S26/3) (Chlamydophila abortus), this protein is tRNA-specific 2-thiouridylase MnmA.